We begin with the raw amino-acid sequence, 156 residues long: Lipoprotein signal peptidase (156 aa).

The next 4 helical transmembrane spans lie at 8–28 (IYIN…KWIL), 39–59 (VFFI…SILS), 67–87 (YFLL…MIKF), and 99–119 (SLIL…GFVI). Residues aspartate 120 and aspartate 138 contribute to the active site. The helical transmembrane segment at 129 to 149 (WHFATFNIADFSIFIGMIMII) threads the bilayer.

This sequence belongs to the peptidase A8 family.

It localises to the cell inner membrane. It carries out the reaction Release of signal peptides from bacterial membrane prolipoproteins. Hydrolyzes -Xaa-Yaa-Zaa-|-(S,diacylglyceryl)Cys-, in which Xaa is hydrophobic (preferably Leu), and Yaa (Ala or Ser) and Zaa (Gly or Ala) have small, neutral side chains.. The protein operates within protein modification; lipoprotein biosynthesis (signal peptide cleavage). In terms of biological role, this protein specifically catalyzes the removal of signal peptides from prolipoproteins. This chain is Lipoprotein signal peptidase, found in Buchnera aphidicola subsp. Schizaphis graminum (strain Sg).